Here is a 129-residue protein sequence, read N- to C-terminus: MKSIQFCFFFCCWKAICCNGCELTNITITVEREECRFCISVNTTWCAGYCYTRDLVYRDPARPNIQKTCTFKELVYETVRVPGCAHHADSLYTYPVATECQCGKCDSDSTDCTVRGLGPSYCSFSEIKE.

The first 18 residues, 1–18, serve as a signal peptide directing secretion; sequence MKSIQFCFFFCCWKAICC. 6 cysteine pairs are disulfide-bonded: C21–C69, C35–C84, C38–C122, C46–C100, C50–C102, and C105–C112. Residues N25 and N42 are each glycosylated (N-linked (GlcNAc...) asparagine).

Belongs to the glycoprotein hormones subunit beta family. As to quaternary structure, heterodimer. The active follitropin is a heterodimer composed of an alpha chain/CGA shared with other hormones and a unique beta chain/FSHB shown here.

The protein localises to the secreted. Functionally, together with the alpha chain CGA constitutes follitropin, the follicle-stimulating hormone, and provides its biological specificity to the hormone heterodimer. Binds FSHR, a G protein-coupled receptor, on target cells to activate downstream signaling pathways. Follitropin is involved in follicle development and spermatogenesis in reproductive organs. In Cavia porcellus (Guinea pig), this protein is Follitropin subunit beta (FSHB).